Consider the following 174-residue polypeptide: Endoribonuclease YbeY (174 aa).

Zn(2+)-binding residues include His-129, His-133, and His-139.

Belongs to the endoribonuclease YbeY family. It depends on Zn(2+) as a cofactor.

It localises to the cytoplasm. Functionally, single strand-specific metallo-endoribonuclease involved in late-stage 70S ribosome quality control and in maturation of the 3' terminus of the 16S rRNA. This Lactobacillus helveticus (strain DPC 4571) protein is Endoribonuclease YbeY.